Consider the following 190-residue polypeptide: MNMVVIGVTGMPGAGKGVVSRIAESMGFRVIRMGDVIRDEARKRGEDPGVTAVRLREEYGKYVVAEKCVERIQESESEMFLIEGIRSPHEVEIFRKRFPGFRVISVFSTRKTRFRRLRKRQREDDSQRYAEFVERDERELGFGIGDVIATSDYMIVNEGPIWKIKKQAKQILRKLAEKGEESSRGGQEDG.

Residue 10-17 coordinates ATP; sequence GMPGAGKG.

This sequence belongs to the UPF0200 family.

This is UPF0200 protein MTH_434 from Methanothermobacter thermautotrophicus (strain ATCC 29096 / DSM 1053 / JCM 10044 / NBRC 100330 / Delta H) (Methanobacterium thermoautotrophicum).